Consider the following 101-residue polypeptide: Small ribosomal subunit protein eS24 (101 aa).

It belongs to the eukaryotic ribosomal protein eS24 family.

This chain is Small ribosomal subunit protein eS24, found in Methanosarcina barkeri (strain Fusaro / DSM 804).